The following is a 482-amino-acid chain: tRNA sulfurtransferase (482 aa).

One can recognise a THUMP domain in the interval 58 to 160; it reads VEALQELSRV…GNKAYLYSNV (103 aa). ATP-binding positions include 178-179, 203-204, Arg-260, Gly-282, and Gln-291; these read LF and HY. Cys-341 and Cys-444 are oxidised to a cystine. A Rhodanese domain is found at 400–482; the sequence is IPGDSIIIDV…RYRAGLEKTR (83 aa). Residue Cys-444 is the Cysteine persulfide intermediate of the active site.

Belongs to the ThiI family.

It is found in the cytoplasm. The enzyme catalyses [ThiI sulfur-carrier protein]-S-sulfanyl-L-cysteine + a uridine in tRNA + 2 reduced [2Fe-2S]-[ferredoxin] + ATP + H(+) = [ThiI sulfur-carrier protein]-L-cysteine + a 4-thiouridine in tRNA + 2 oxidized [2Fe-2S]-[ferredoxin] + AMP + diphosphate. It catalyses the reaction [ThiS sulfur-carrier protein]-C-terminal Gly-Gly-AMP + S-sulfanyl-L-cysteinyl-[cysteine desulfurase] + AH2 = [ThiS sulfur-carrier protein]-C-terminal-Gly-aminoethanethioate + L-cysteinyl-[cysteine desulfurase] + A + AMP + 2 H(+). It functions in the pathway cofactor biosynthesis; thiamine diphosphate biosynthesis. In terms of biological role, catalyzes the ATP-dependent transfer of a sulfur to tRNA to produce 4-thiouridine in position 8 of tRNAs, which functions as a near-UV photosensor. Also catalyzes the transfer of sulfur to the sulfur carrier protein ThiS, forming ThiS-thiocarboxylate. This is a step in the synthesis of thiazole, in the thiamine biosynthesis pathway. The sulfur is donated as persulfide by IscS. This is tRNA sulfurtransferase from Desulfurococcus amylolyticus (strain DSM 18924 / JCM 16383 / VKM B-2413 / 1221n) (Desulfurococcus kamchatkensis).